The following is a 119-amino-acid chain: Phosphoribosyl-AMP cyclohydrolase (119 aa).

Residue D77 coordinates Mg(2+). Residue C78 coordinates Zn(2+). The Mg(2+) site is built by D79 and D81. Residues C94 and C101 each coordinate Zn(2+).

The protein belongs to the PRA-CH family. Homodimer. Mg(2+) serves as cofactor. Requires Zn(2+) as cofactor.

The protein localises to the cytoplasm. The catalysed reaction is 1-(5-phospho-beta-D-ribosyl)-5'-AMP + H2O = 1-(5-phospho-beta-D-ribosyl)-5-[(5-phospho-beta-D-ribosylamino)methylideneamino]imidazole-4-carboxamide. The protein operates within amino-acid biosynthesis; L-histidine biosynthesis; L-histidine from 5-phospho-alpha-D-ribose 1-diphosphate: step 3/9. Catalyzes the hydrolysis of the adenine ring of phosphoribosyl-AMP. This chain is Phosphoribosyl-AMP cyclohydrolase, found in Ruegeria pomeroyi (strain ATCC 700808 / DSM 15171 / DSS-3) (Silicibacter pomeroyi).